Here is a 213-residue protein sequence, read N- to C-terminus: MKDTPKHQGLRNQLVTVLQQKGITNKNILEAISKIPRHLFLNSSFEDYAYQDLAFPIGAGQTISQPYTVAFQTELLEVKKGDKVLEIGTGSGYQTAVLCMVGAVVYSVERQNELFKKTSLLLPKLGIRAKHLSFGDGYKGLPNYAPFDSIIVTAGAPEIPKALMAQLKIGGKLVIPVGENSQIMTLIIRKDETQFEKHEFGDFKFVPLLEDKN.

Residue Ser64 is part of the active site.

The protein belongs to the methyltransferase superfamily. L-isoaspartyl/D-aspartyl protein methyltransferase family.

The protein localises to the cytoplasm. It catalyses the reaction [protein]-L-isoaspartate + S-adenosyl-L-methionine = [protein]-L-isoaspartate alpha-methyl ester + S-adenosyl-L-homocysteine. In terms of biological role, catalyzes the methyl esterification of L-isoaspartyl residues in peptides and proteins that result from spontaneous decomposition of normal L-aspartyl and L-asparaginyl residues. It plays a role in the repair and/or degradation of damaged proteins. The protein is Protein-L-isoaspartate O-methyltransferase of Flavobacterium psychrophilum (strain ATCC 49511 / DSM 21280 / CIP 103535 / JIP02/86).